We begin with the raw amino-acid sequence, 256 residues long: GTP cyclohydrolase FolE2 (256 aa).

It belongs to the GTP cyclohydrolase IV family.

It catalyses the reaction GTP + H2O = 7,8-dihydroneopterin 3'-triphosphate + formate + H(+). It functions in the pathway cofactor biosynthesis; 7,8-dihydroneopterin triphosphate biosynthesis; 7,8-dihydroneopterin triphosphate from GTP: step 1/1. Converts GTP to 7,8-dihydroneopterin triphosphate. This is GTP cyclohydrolase FolE2 from Caldicellulosiruptor bescii (strain ATCC BAA-1888 / DSM 6725 / KCTC 15123 / Z-1320) (Anaerocellum thermophilum).